We begin with the raw amino-acid sequence, 69 residues long: Probable cold shock protein y4cH (69 aa).

The CSD domain occupies 5-65 (GTVKWFNATK…DRKSGKMSAD (61 aa)).

Its subcellular location is the cytoplasm. The protein is Probable cold shock protein y4cH of Sinorhizobium fredii (strain NBRC 101917 / NGR234).